The following is a 919-amino-acid chain: UPF0182 protein SUN_1015 (919 aa).

7 helical membrane passes run 8–28 (IIIT…VDYY), 51–71 (ILSF…HIHF), 102–122 (AVAW…GSYA), 158–178 (VYQF…IGVL), 207–227 (LTAF…YNIL), 246–266 (IPAY…LFFY), and 274–294 (VIVS…WIYP).

Belongs to the UPF0182 family.

The protein resides in the cell membrane. This is UPF0182 protein SUN_1015 from Sulfurovum sp. (strain NBC37-1).